The chain runs to 201 residues: Recombination protein RecR (201 aa).

A C4-type zinc finger spans residues 57–72 (CECCRTLTEEPLCRIC). A Toprim domain is found at 81 to 176 (GVLCIVETPA…NTTRIAHGVP (96 aa)).

The protein belongs to the RecR family.

In terms of biological role, may play a role in DNA repair. It seems to be involved in an RecBC-independent recombinational process of DNA repair. It may act with RecF and RecO. The polypeptide is Recombination protein RecR (Idiomarina loihiensis (strain ATCC BAA-735 / DSM 15497 / L2-TR)).